The following is a 781-amino-acid chain: Molybdenum cofactor sulfurase (781 aa).

K246 carries the N6-(pyridoxal phosphate)lysine modification. The active site involves C413. Positions 619-781 (GDAVAQWLSE…MTCGDVVIVE (163 aa)) constitute an MOSC domain. Phosphoserine is present on S734.

It belongs to the class-V pyridoxal-phosphate-dependent aminotransferase family. MOCOS subfamily. Requires pyridoxal 5'-phosphate as cofactor.

The enzyme catalyses Mo-molybdopterin + L-cysteine + AH2 = thio-Mo-molybdopterin + L-alanine + A + H2O. Its pathway is cofactor biosynthesis; molybdopterin biosynthesis. In terms of biological role, sulfurates the molybdenum cofactor. Sulfation of molybdenum is essential for xanthine dehydrogenase (XDH) and aldehyde oxidase (ADO) enzymes in which molybdenum cofactor is liganded by 1 oxygen and 1 sulfur atom in active form. This is Molybdenum cofactor sulfurase from Drosophila erecta (Fruit fly).